The sequence spans 40 residues: Sulfur globule protein TR0 (40 aa).

It to C.vinosum CV1 and CV2. As to quaternary structure, the protein envelope of the sulfur globules is composed of the three different proteins TR0, TR1 and TR2.

Functionally, structural protein of the sulfur globules, which are intracellular globules that serve for sulfur storage in purple sulfur bacteria. This chain is Sulfur globule protein TR0, found in Thiocapsa roseopersicina.